The primary structure comprises 332 residues: Glycerol-3-phosphate dehydrogenase [NAD(P)+] (332 aa).

NADPH contacts are provided by serine 11, tryptophan 12, lysine 32, and lysine 106. Residues lysine 106, glycine 137, and serine 139 each coordinate sn-glycerol 3-phosphate. Residue alanine 141 participates in NADPH binding. Lysine 192, aspartate 245, serine 255, arginine 256, and asparagine 257 together coordinate sn-glycerol 3-phosphate. Lysine 192 functions as the Proton acceptor in the catalytic mechanism. Residue arginine 256 coordinates NADPH. NADPH-binding residues include valine 280 and glutamate 282.

It belongs to the NAD-dependent glycerol-3-phosphate dehydrogenase family.

The protein localises to the cytoplasm. It catalyses the reaction sn-glycerol 3-phosphate + NAD(+) = dihydroxyacetone phosphate + NADH + H(+). It carries out the reaction sn-glycerol 3-phosphate + NADP(+) = dihydroxyacetone phosphate + NADPH + H(+). Its pathway is membrane lipid metabolism; glycerophospholipid metabolism. Its function is as follows. Catalyzes the reduction of the glycolytic intermediate dihydroxyacetone phosphate (DHAP) to sn-glycerol 3-phosphate (G3P), the key precursor for phospholipid synthesis. The chain is Glycerol-3-phosphate dehydrogenase [NAD(P)+] from Macrococcus caseolyticus (strain JCSC5402) (Macrococcoides caseolyticum).